Consider the following 175-residue polypeptide: Dof zinc finger protein DOF1.5 (175 aa).

The interval 29–57 is disordered; the sequence is EEQQQQQQPELQATTAVRSPSSDLTAEKR. Residues 37 to 52 show a composition bias toward polar residues; the sequence is PELQATTAVRSPSSDL. Residues 62-116 form a Dof-type zinc finger; that stretch reads IPCPRCKSMETKFCYFNNYNVNQPRHFCKGCQRYWTAGGALRNVPVGAGRRKSKP. The Zn(2+) site is built by cysteine 64, cysteine 67, cysteine 89, and cysteine 92. The short motif at 162-168 is the Nuclear localization signal element; that stretch reads PVKRLRC.

The protein resides in the nucleus. Transcription factor that binds specifically to a 5'-AA[AG]G-3' consensus core sequence. Acts as a negative regulator in the phytochrome-mediated light responses. Controls phyB-mediated end-of-day response and the phyA-mediated anthocyanin accumulation. Not involved in direct flowering time regulation. The protein is Dof zinc finger protein DOF1.5 (DOF1.5) of Arabidopsis thaliana (Mouse-ear cress).